A 555-amino-acid polypeptide reads, in one-letter code: Urocanate hydratase (555 aa).

Residues 52–53, Q130, 176–178, E196, R201, 242–243, 263–267, 273–274, and Y322 contribute to the NAD(+) site; these read GG, GMG, NA, QTSAH, and YL. C410 is a catalytic residue. NAD(+) is bound at residue G492.

The protein belongs to the urocanase family. NAD(+) serves as cofactor.

Its subcellular location is the cytoplasm. The enzyme catalyses 4-imidazolone-5-propanoate = trans-urocanate + H2O. It participates in amino-acid degradation; L-histidine degradation into L-glutamate; N-formimidoyl-L-glutamate from L-histidine: step 2/3. Functionally, catalyzes the conversion of urocanate to 4-imidazolone-5-propionate. This is Urocanate hydratase from Shewanella baltica (strain OS223).